A 98-amino-acid chain; its full sequence is MSSYKYYDLIRKPIITEKTTTLSEQNKYAFYVDKFAEKLTIKKAIEEIFKVKVKKVNILNVKGKKKRFKGIIGTQINRKKAIVTLEKDHNIDFAGGIK.

It belongs to the universal ribosomal protein uL23 family. As to quaternary structure, part of the 50S ribosomal subunit. Contacts protein L29, and trigger factor when it is bound to the ribosome.

In terms of biological role, one of the early assembly proteins it binds 23S rRNA. One of the proteins that surrounds the polypeptide exit tunnel on the outside of the ribosome. Forms the main docking site for trigger factor binding to the ribosome. The chain is Large ribosomal subunit protein uL23 from Rickettsia peacockii (strain Rustic).